Consider the following 446-residue polypeptide: Thymidine phosphorylase (446 aa).

This sequence belongs to the thymidine/pyrimidine-nucleoside phosphorylase family. In terms of assembly, homodimer.

It catalyses the reaction thymidine + phosphate = 2-deoxy-alpha-D-ribose 1-phosphate + thymine. It participates in pyrimidine metabolism; dTMP biosynthesis via salvage pathway; dTMP from thymine: step 1/2. In terms of biological role, the enzymes which catalyze the reversible phosphorolysis of pyrimidine nucleosides are involved in the degradation of these compounds and in their utilization as carbon and energy sources, or in the rescue of pyrimidine bases for nucleotide synthesis. This chain is Thymidine phosphorylase, found in Psychromonas ingrahamii (strain DSM 17664 / CCUG 51855 / 37).